A 225-amino-acid chain; its full sequence is 7-carboxy-7-deazaguanine synthase (225 aa).

Substrate-binding positions include 12–14 (IQG) and Arg-27. Positions 18–225 (YIGVRQLFVR…PQVHKYLGVR (208 aa)) constitute a Radical SAM core domain. Positions 31, 35, and 38 each coordinate [4Fe-4S] cluster. Thr-40 contacts Mg(2+). Thr-80 contributes to the substrate binding site. Gly-82 contacts S-adenosyl-L-methionine.

Belongs to the radical SAM superfamily. 7-carboxy-7-deazaguanine synthase family. In terms of assembly, homodimer. [4Fe-4S] cluster serves as cofactor. The cofactor is S-adenosyl-L-methionine. Requires Mg(2+) as cofactor.

The enzyme catalyses 6-carboxy-5,6,7,8-tetrahydropterin + H(+) = 7-carboxy-7-deazaguanine + NH4(+). The protein operates within purine metabolism; 7-cyano-7-deazaguanine biosynthesis. Catalyzes the complex heterocyclic radical-mediated conversion of 6-carboxy-5,6,7,8-tetrahydropterin (CPH4) to 7-carboxy-7-deazaguanine (CDG), a step common to the biosynthetic pathways of all 7-deazapurine-containing compounds. This chain is 7-carboxy-7-deazaguanine synthase, found in Archaeoglobus fulgidus (strain ATCC 49558 / DSM 4304 / JCM 9628 / NBRC 100126 / VC-16).